An 832-amino-acid polypeptide reads, in one-letter code: Vacuolar transmembrane transporter penV (832 aa).

The next 2 helical transmembrane spans lie at 39-59 (LYTQ…AFCI) and 117-137 (FFKF…AIIL). The segment at 152-171 (WDNPPGNKTTSPIDGSEKEK) is disordered. An N-linked (GlcNAc...) asparagine glycan is attached at Asn-158. A helical transmembrane segment spans residues 178–198 (YLWIYVLFAYVFSGLAIYMLL). N-linked (GlcNAc...) asparagine glycosylation occurs at Asn-214. Positions 291–322 (NDGNALPLTEQQPRDADDERSGLLSGHDNEHV) are disordered. Over residues 302–321 (QPRDADDERSGLLSGHDNEH) the composition is skewed to basic and acidic residues. Transmembrane regions (helical) follow at residues 434-454 (FVIG…ASLL), 483-503 (GLPT…YEWL), 524-544 (FFFS…ASGF), 560-582 (TIAL…LLIL), 587-608 (LFPF…FLSA), 623-645 (FSYG…YSVF), 650-672 (LICL…QLLY), 687-707 (MICN…IGVL), and 713-733 (ITRS…SYWF). The disordered stretch occupies residues 754–777 (PGGGDISPSPSSTLSPPSGLDRDS). Residues 759–771 (ISPSPSSTLSPPS) show a composition bias toward low complexity.

This sequence belongs to the CSC1 (TC 1.A.17) family.

It is found in the vacuole membrane. Vacuolar transmembrane transporter that participates in the first stage of the beta-lactam biosynthesis (the formation of the ACV tripeptide), probably taking part in the supply of amino acids from the vacuolar lumen to the vacuole-anchored ACV synthetase. This Penicillium rubens (strain ATCC 28089 / DSM 1075 / NRRL 1951 / Wisconsin 54-1255) (Penicillium chrysogenum) protein is Vacuolar transmembrane transporter penV.